Here is a 247-residue protein sequence, read N- to C-terminus: 2,3-bisphosphoglycerate-dependent phosphoglycerate mutase (247 aa).

Substrate-binding positions include 8–15 (RHGESTWN), 21–22 (TG), R60, 87–90 (ERHY), K98, 114–115 (RR), and 183–184 (GN). H9 serves as the catalytic Tele-phosphohistidine intermediate. E87 (proton donor/acceptor) is an active-site residue.

This sequence belongs to the phosphoglycerate mutase family. BPG-dependent PGAM subfamily. In terms of assembly, homodimer.

It catalyses the reaction (2R)-2-phosphoglycerate = (2R)-3-phosphoglycerate. The protein operates within carbohydrate degradation; glycolysis; pyruvate from D-glyceraldehyde 3-phosphate: step 3/5. Catalyzes the interconversion of 2-phosphoglycerate and 3-phosphoglycerate. The polypeptide is 2,3-bisphosphoglycerate-dependent phosphoglycerate mutase (Paracidovorax citrulli (strain AAC00-1) (Acidovorax citrulli)).